We begin with the raw amino-acid sequence, 229 residues long: 7-cyano-7-deazaguanine synthase (229 aa).

15-25 is an ATP binding site; that stretch reads LSGGLDSATVV. Residues Cys194, Cys204, Cys207, and Cys210 each coordinate Zn(2+).

The protein belongs to the QueC family. Zn(2+) is required as a cofactor.

It carries out the reaction 7-carboxy-7-deazaguanine + NH4(+) + ATP = 7-cyano-7-deazaguanine + ADP + phosphate + H2O + H(+). The protein operates within purine metabolism; 7-cyano-7-deazaguanine biosynthesis. Catalyzes the ATP-dependent conversion of 7-carboxy-7-deazaguanine (CDG) to 7-cyano-7-deazaguanine (preQ(0)). This chain is 7-cyano-7-deazaguanine synthase, found in Pseudomonas syringae pv. syringae (strain B728a).